The chain runs to 502 residues: Cytochrome c-552 (502 aa).

Residues 1–25 form the signal peptide; the sequence is MKYLTKSRVIATIAMLGCLSVSAWA. Heme c is bound at residue His-105. Residues Cys-133, Cys-136, and Lys-137 each contribute to the heme site. Heme c-binding residues include Cys-171, Cys-174, His-175, Cys-220, Cys-223, and His-224. Ca(2+) contacts are provided by Glu-226, Tyr-227, Lys-271, and Gln-273. Tyr-227 contributes to the substrate binding site. His-274 lines the substrate pocket. Heme c contacts are provided by His-285, Cys-292, Cys-295, His-296, His-311, Cys-324, Cys-327, His-328, and His-403. The interval 481-502 is disordered; that stretch reads RERGLLPEVTPKSVTTPKVDAK.

The protein belongs to the cytochrome c-552 family. Ca(2+) serves as cofactor. Heme c is required as a cofactor.

Its subcellular location is the periplasm. The catalysed reaction is 6 Fe(III)-[cytochrome c] + NH4(+) + 2 H2O = 6 Fe(II)-[cytochrome c] + nitrite + 8 H(+). Its pathway is nitrogen metabolism; nitrate reduction (assimilation). Functionally, catalyzes the reduction of nitrite to ammonia, consuming six electrons in the process. The sequence is that of Cytochrome c-552 from Haemophilus ducreyi (strain 35000HP / ATCC 700724).